The primary structure comprises 381 residues: Short-chain dehydrogenase anuD (381 aa).

Residues Ile84, Lys109, Asp133, Asn158, Tyr244, and Lys248 each contribute to the NADP(+) site. The Proton acceptor role is filled by Tyr244. Tyr244 serves as the catalytic Proton donor. Lys248 functions as the Lowers pKa of active site Tyr in the catalytic mechanism.

This sequence belongs to the short-chain dehydrogenases/reductases (SDR) family.

Functionally, highly reducing polyketide synthase; part of the gene cluster that mediates the biosynthesis of annullatin D, an alkylated aromatic polyketide with a fused dihydrobenzofuran lactone ring system that exhibits potent agonistic activities toward the cannabinoid receptors. AnuD does not seem to play a role within the pathway. The annullatin backbone 2-hydroxymethyl-3-pentylphenol is assembled from one acetyl-CoA starter unit and 5 malonyl-CoA elongation units by cooperation of the highly reducing polyketide synthase anuA, the short-chain dehydrogenase anuB and the oxidoreductase anuC, before being hydroxylated at the C-5 alkyl chain by the cytochrome P450 monooxygenase anuE to form (8S)-annullatin E. The prenyltransferase anuH subsequently installs one isoprenyl group at the benzene ring to form (8S)-annullatin J. Enzymatic or nonenzymatic dihydro-benzofuran ring formation between the prenyl and the phenolic hydroxyl groups in (8S)-annullatin J results in two diastereomers (2S,9S)-annullatin H and compound 12. The intermediate (2S,9S)-annullatin H is then converted to (2S,9S)-annullatin D by the FAD-linked oxidoreductase anuG-catalyzed five-member lactone ring formation. The isomer 12 acts as a substrate for the short-chain dehydrogenase anuF and is oxidized to (2R)-annullatin F, which is subsequently acetylated by an acetyltransferase leading to (2R)-annullatin G formation. The remaining enzymes identified within the cluster, anuD, anuI and anuJ, seem not to be involved in annullatin biosynthesis. The sequence is that of Short-chain dehydrogenase anuD from Penicillium roqueforti (strain FM164).